The chain runs to 352 residues: S-norcoclaurine synthase 1 (352 aa).

Positions 200–304 (KPLRTVFNRE…RLSIAAFHDP (105 aa)) constitute a Fe2OG dioxygenase domain. Fe cation-binding residues include His-228, Asp-230, and His-285.

Belongs to the iron/ascorbate-dependent oxidoreductase family. As to quaternary structure, monomer. Requires Fe cation as cofactor.

It carries out the reaction (4-hydroxyphenyl)acetaldehyde + dopamine = (S)-norcoclaurine + H2O. With respect to regulation, inhibited by O-phenanthroline, but not by EDTA. Involved in the biosynthesis of the common precursor of all benzylisoquinoline alkaloids such as morphine, sanguinarine, codeine or berberine. Condenses dopamine and phenylacetaldehyde, 3,4-dihydrophenylacetaldehyde or 4-hydroxyphenylacetaldehyde. This chain is S-norcoclaurine synthase 1 (NCS1), found in Coptis japonica (Japanese goldthread).